We begin with the raw amino-acid sequence, 207 residues long: Transcriptional regulatory protein RcsA (207 aa).

The 66-residue stretch at 131 to 196 (LTLPTLSLSK…VIYHIVRLTE (66 aa)) folds into the HTH luxR-type domain. Residues 155 to 174 (TSQISTQMNIKAKTVSSHKG) constitute a DNA-binding region (H-T-H motif).

The protein belongs to the RcsA family.

In terms of biological role, component of the Rcs signaling system, which controls transcription of numerous genes. Binds to DNA to regulate expression of genes. This chain is Transcriptional regulatory protein RcsA, found in Klebsiella aerogenes (Enterobacter aerogenes).